A 282-amino-acid polypeptide reads, in one-letter code: Shikimate dehydrogenase (NADP(+)) (282 aa).

Residues 15-17 (SKS) and Thr62 contribute to the shikimate site. Residue Lys66 is the Proton acceptor of the active site. Shikimate-binding residues include Asn87 and Asp103. Residues 127–131 (GAGGA), 151–156 (NRTHTK), and Met220 each bind NADP(+). A shikimate-binding site is contributed by Tyr222. Gly244 contacts NADP(+).

The protein belongs to the shikimate dehydrogenase family. In terms of assembly, homodimer.

The enzyme catalyses shikimate + NADP(+) = 3-dehydroshikimate + NADPH + H(+). Its pathway is metabolic intermediate biosynthesis; chorismate biosynthesis; chorismate from D-erythrose 4-phosphate and phosphoenolpyruvate: step 4/7. Its function is as follows. Involved in the biosynthesis of the chorismate, which leads to the biosynthesis of aromatic amino acids. Catalyzes the reversible NADPH linked reduction of 3-dehydroshikimate (DHSA) to yield shikimate (SA). The sequence is that of Shikimate dehydrogenase (NADP(+)) from Shewanella baltica (strain OS195).